The chain runs to 151 residues: Calmodulin (151 aa).

4 EF-hand domains span residues 10–45 (EQIS…LGQN), 46–81 (PTEA…KMKD), 83–118 (DSEE…LGEK), and 119–151 (LTDE…MLSK). Residues aspartate 23, aspartate 25, aspartate 27, serine 29, glutamate 34, aspartate 59, aspartate 61, asparagine 63, threonine 65, glutamate 70, aspartate 96, aspartate 98, asparagine 100, glutamate 107, aspartate 132, aspartate 134, aspartate 136, and glutamate 143 each coordinate Ca(2+).

Belongs to the calmodulin family.

Functionally, calmodulin mediates the control of a large number of enzymes, ion channels and other proteins by Ca(2+). Among the enzymes to be stimulated by the calmodulin-Ca(2+) complex are a number of protein kinases and phosphatases. This Pneumocystis carinii protein is Calmodulin.